Reading from the N-terminus, the 436-residue chain is GTPase Der (436 aa).

EngA-type G domains lie at 4–167 (PTVA…PNEI) and 175–351 (IKFS…HAQN). GTP is bound by residues 10-17 (GRPNVGKS), 57-61 (DTGGI), 119-122 (NKVD), 181-188 (GRPNVGKS), 229-233 (DTAGM), and 294-297 (NKWD). A KH-like domain is found at 352–436 (LRISSSVLND…PVHLIARKRK (85 aa)).

The protein belongs to the TRAFAC class TrmE-Era-EngA-EngB-Septin-like GTPase superfamily. EngA (Der) GTPase family. Associates with the 50S ribosomal subunit.

Functionally, GTPase that plays an essential role in the late steps of ribosome biogenesis. This Lactococcus lactis subsp. lactis (strain IL1403) (Streptococcus lactis) protein is GTPase Der.